The primary structure comprises 88 residues: MGIARILSAVLFLSVLFVVTFPALLSADHHDGRIDTCRLPSDRGRCKASFERWYFNGRTCAKFIYGGCGGNGNKFPTQEACMKRCGKA.

The first 27 residues, 1-27 (MGIARILSAVLFLSVLFVVTFPALLSA), serve as a signal peptide directing secretion. The propeptide occupies 28–33 (DHHDGR). The BPTI/Kunitz inhibitor domain occupies 37-85 (CRLPSDRGRCKASFERWYFNGRTCAKFIYGGCGGNGNKFPTQEACMKRC). Disulfide bonds link Cys-37–Cys-85, Cys-46–Cys-68, and Cys-60–Cys-81.

It belongs to the venom Kunitz-type family. 02 (native) subfamily. In terms of tissue distribution, expressed by the venom gland.

It localises to the secreted. In terms of biological role, serine protease inhibitor that inhibits trypsin at a molar ratio of 1:1. This is Kunitz-type kappaPI-theraphotoxin-Hs1b from Cyriopagopus schmidti (Chinese bird spider).